The primary structure comprises 194 residues: Protein GrpE (194 aa).

The segment covering 1-13 (MENTQENPTSQNP) has biased composition (polar residues). The disordered stretch occupies residues 1–50 (MENTQENPTSQNPKPAEETARQAAEAAAPQQEAAANAATDSPASAEQAAL). Positions 21–50 (RQAAEAAAPQQEAAANAATDSPASAEQAAL) are enriched in low complexity.

Belongs to the GrpE family. Homodimer.

The protein resides in the cytoplasm. Its function is as follows. Participates actively in the response to hyperosmotic and heat shock by preventing the aggregation of stress-denatured proteins, in association with DnaK and GrpE. It is the nucleotide exchange factor for DnaK and may function as a thermosensor. Unfolded proteins bind initially to DnaJ; upon interaction with the DnaJ-bound protein, DnaK hydrolyzes its bound ATP, resulting in the formation of a stable complex. GrpE releases ADP from DnaK; ATP binding to DnaK triggers the release of the substrate protein, thus completing the reaction cycle. Several rounds of ATP-dependent interactions between DnaJ, DnaK and GrpE are required for fully efficient folding. The chain is Protein GrpE from Paraburkholderia xenovorans (strain LB400).